Here is a 446-residue protein sequence, read N- to C-terminus: Tubulin beta-6 chain (446 aa).

The MREI motif signature appears at 1-4 (MREI). GTP-binding residues include glutamine 11, glutamate 69, serine 138, glycine 142, threonine 143, and glycine 144. Glutamate 69 is a binding site for Mg(2+). Serine 172 is subject to Phosphoserine; by CDK1. The GTP site is built by asparagine 204 and asparagine 226. Glutamate 438 carries the post-translational modification 5-glutamyl polyglutamate.

It belongs to the tubulin family. In terms of assembly, dimer of alpha and beta chains. A typical microtubule is a hollow water-filled tube with an outer diameter of 25 nm and an inner diameter of 15 nM. Alpha-beta heterodimers associate head-to-tail to form protofilaments running lengthwise along the microtubule wall with the beta-tubulin subunit facing the microtubule plus end conferring a structural polarity. Microtubules usually have 13 protofilaments but different protofilament numbers can be found in some organisms and specialized cells. Mg(2+) serves as cofactor. Post-translationally, some glutamate residues at the C-terminus are polyglutamylated, resulting in polyglutamate chains on the gamma-carboxyl group. Polyglutamylation plays a key role in microtubule severing by spastin (SPAST). SPAST preferentially recognizes and acts on microtubules decorated with short polyglutamate tails: severing activity by SPAST increases as the number of glutamates per tubulin rises from one to eight, but decreases beyond this glutamylation threshold. Glutamylation is also involved in cilia motility. In terms of processing, some glutamate residues at the C-terminus are monoglycylated but not polyglycylated due to the absence of functional TTLL10 in human. Monoglycylation is mainly limited to tubulin incorporated into cilia and flagella axonemes, which is required for their stability and maintenance. Flagella glycylation controls sperm motility. Both polyglutamylation and monoglycylation can coexist on the same protein on adjacent residues, and lowering glycylation levels increases polyglutamylation, and reciprocally. Phosphorylated on Ser-172 by CDK1 during the cell cycle, from metaphase to telophase, but not in interphase. This phosphorylation inhibits tubulin incorporation into microtubules. Ubiquitous. Maximal expression in breast and lung, where it represents around 10% of all beta-tubulins. Largely decreased expression in most cancerous tissues.

The protein resides in the cytoplasm. It localises to the cytoskeleton. Tubulin is the major constituent of microtubules, a cylinder consisting of laterally associated linear protofilaments composed of alpha- and beta-tubulin heterodimers. Microtubules grow by the addition of GTP-tubulin dimers to the microtubule end, where a stabilizing cap forms. Below the cap, tubulin dimers are in GDP-bound state, owing to GTPase activity of alpha-tubulin. The chain is Tubulin beta-6 chain (TUBB6) from Homo sapiens (Human).